The following is a 119-amino-acid chain: Integration host factor subunit beta (119 aa).

Residues 93–119 (AGGLADTQPDGDAPDQPQPTLLGLHAM) are disordered. Over residues 97-112 (ADTQPDGDAPDQPQPT) the composition is skewed to low complexity.

Belongs to the bacterial histone-like protein family. As to quaternary structure, heterodimer of an alpha and a beta chain.

This protein is one of the two subunits of integration host factor, a specific DNA-binding protein that functions in genetic recombination as well as in transcriptional and translational control. This Bordetella petrii (strain ATCC BAA-461 / DSM 12804 / CCUG 43448) protein is Integration host factor subunit beta.